Consider the following 73-residue polypeptide: Mu-conotoxin SIIIA (73 aa).

The N-terminal stretch at 1 to 20 (MMSKLGVLLTVCPLLFPLTA) is a signal peptide. Positions 20-40 (ALPPDGDQPADRPAERMQDDI) are disordered. A propeptide spanning residues 21–49 (LPPDGDQPADRPAERMQDDISSDEHPLFD) is cleaved from the precursor. The segment covering 28–40 (PADRPAERMQDDI) has biased composition (basic and acidic residues). Gln52 carries the post-translational modification Pyrrolidone carboxylic acid. Intrachain disulfides connect Cys54/Cys64, Cys55/Cys70, and Cys59/Cys71. Position 71 is a cysteine amide (Cys71).

The protein belongs to the conotoxin M superfamily. In terms of tissue distribution, expressed by the venom duct.

The protein resides in the secreted. Functionally, mu-conotoxins block voltage-gated sodium channels (Nav). This toxin moderately blocks rNav1.1/SCN1A, rNav1.2/SCN2A, rNav1.3/SCN3A, rNav1.4/SCN4A, and mNav1.6/SCN8A. The protein is Mu-conotoxin SIIIA of Conus striatus (Striated cone).